The chain runs to 165 residues: Putative protein FAM86C1P (165 aa).

It belongs to the class I-like SAM-binding methyltransferase superfamily. EEF2KMT family. Interacts with EEF2KMT.

In Homo sapiens (Human), this protein is Putative protein FAM86C1P.